The following is a 150-amino-acid chain: Histone H2B.2 (150 aa).

Basic and acidic residues predominate over residues Met-1–Glu-16. The segment at Met-1–Lys-57 is disordered. An N6-acetyllysine mark is found at Lys-7 and Lys-34. Lys-146 is covalently cross-linked (Glycyl lysine isopeptide (Lys-Gly) (interchain with G-Cter in ubiquitin)).

Belongs to the histone H2B family. The nucleosome is a histone octamer containing two molecules each of H2A, H2B, H3 and H4 assembled in one H3-H4 heterotetramer and two H2A-H2B heterodimers. The octamer wraps approximately 147 bp of DNA. In terms of processing, can be acetylated to form H2BK6ac and H2BK33ac. Post-translationally, monoubiquitinated to form H2BK143ub1; may give a specific tag for epigenetic transcriptional activation.

The protein localises to the nucleus. Its subcellular location is the chromosome. In terms of biological role, core component of nucleosome. Nucleosomes wrap and compact DNA into chromatin, limiting DNA accessibility to the cellular machineries which require DNA as a template. Histones thereby play a central role in transcription regulation, DNA repair, DNA replication and chromosomal stability. DNA accessibility is regulated via a complex set of post-translational modifications of histones, also called histone code, and nucleosome remodeling. The protein is Histone H2B.2 of Zea mays (Maize).